We begin with the raw amino-acid sequence, 268 residues long: Tryptophan synthase alpha chain (268 aa).

Catalysis depends on proton acceptor residues glutamate 49 and aspartate 60.

The protein belongs to the TrpA family. Tetramer of two alpha and two beta chains.

It catalyses the reaction (1S,2R)-1-C-(indol-3-yl)glycerol 3-phosphate + L-serine = D-glyceraldehyde 3-phosphate + L-tryptophan + H2O. It functions in the pathway amino-acid biosynthesis; L-tryptophan biosynthesis; L-tryptophan from chorismate: step 5/5. The alpha subunit is responsible for the aldol cleavage of indoleglycerol phosphate to indole and glyceraldehyde 3-phosphate. The sequence is that of Tryptophan synthase alpha chain from Haemophilus influenzae (strain PittEE).